Reading from the N-terminus, the 436-residue chain is Chaperone protein dnaJ 16 (436 aa).

The J domain maps to 20 to 85; it reads DPYEVLGVLR…EKRRQFDSAG (66 aa). Residues 291 to 348 adopt a coiled-coil conformation; sequence TQEKEDLRSVEAQILTKRAELAKFETEYREVLVQFTDMTSRYAQEMQSIDELLKQRNE. Residues 360–416 form a disordered region; sequence KRSSSKNRMRKSSFKKAAAKAPAPTEQEEEEEEEEEEEEESSRQKNKKPSTCDKSET. Residues 362-377 are compositionally biased toward basic residues; that stretch reads SSSKNRMRKSSFKKAA. Positions 385–399 are enriched in acidic residues; the sequence is EQEEEEEEEEEEEEE.

It belongs to the DnaJ family. B/II subfamily. In terms of tissue distribution, expressed constitutively in seedlings, roots, leaves, stems, flowers and siliques.

The protein resides in the membrane. Functionally, plays a continuous role in plant development probably in the structural organization of compartments. Seems to not be involved in gravitropism signaling pathway. The polypeptide is Chaperone protein dnaJ 16 (ATJ16) (Arabidopsis thaliana (Mouse-ear cress)).